We begin with the raw amino-acid sequence, 367 residues long: Prenyltransferase idtC (367 aa).

The first 22 residues, 1–22 (MTTLAWFAGRSMVLDLAALTSA), serve as a signal peptide directing secretion. A compositionally biased stretch (low complexity) spans 32–42 (TSTPTSTPTST). The segment at 32–84 (TSTPTSTPTSTDKAGTPPGSTIHHYGYPQGSVTKPNNSKTEKENGSPKDSKGN) is disordered. Asn-67 carries N-linked (GlcNAc...) asparagine glycosylation. Basic and acidic residues predominate over residues 70–82 (KTEKENGSPKDSK). Substrate is bound at residue His-132. Positions 139 and 143 each coordinate Mg(2+). Residue Arg-148 participates in substrate binding. N-linked (GlcNAc...) asparagine glycosylation is present at Asn-150. Substrate is bound by residues Lys-233, Thr-234, Gln-264, Asn-271, and Lys-281.

It belongs to the FPP/GGPP synthase family. Mg(2+) is required as a cofactor.

Its pathway is secondary metabolite biosynthesis. In terms of biological role, prenyltransferase; part of the gene cluster that mediates the biosynthesis of paspalitrems, indole-diterpene (IDT) mycotoxins that are potent tremorgens in mammals. The geranylgeranyl diphosphate (GGPP) synthase idtG is proposed to catalyze the first step in IDT biosynthesis via catalysis of a series of iterative condensations of isopentenyl diphosphate (IPP) with dimethylallyl diphosphate (DMAPP), geranyl diphosphate (GPP), and farnesyl diphosphate (FPP), to form GGPP. Condensation of indole-3-glycerol phosphate with GGPP by the prenyltransferase idtC then forms 3-geranylgeranylindole (3-GGI). Epoxidation of the two terminal alkenes of the geranylgeranyl moiety by the FAD-dependent monooxygenase idtM, and cyclization by the terpene cyclase idtB then leads to the production of paspaline. The cytochrome P450 monooxygenase idtP then catalyzes oxidative elimination of the pendant methyl group at C-12 of paspaline and generates the C-10 ketone to yield 13-desoxypaxilline. The cytochrome P450 monooxygenase idtQ may catalyze the C-13 oxidation of 13-desoxypaxilline to afford paxilline. Considering that both paspalicine and paxilline were detected in C.paspali, idtQ also catalyzes the formation of paspalinine from 13-desoxypaxilline via paspalicine as an intermediate. Finally, the alpha-prenyltransferase idtF prenylates paspalinine at the C-20 or the C-21 positions to yield paspalitrems A and C, respectively. The hydroxylation of paspalitrem A at C-32 by a still unknown oxidase affords paspalitrem B. The sequence is that of Prenyltransferase idtC from Claviceps paspali (Rye ergot fungus).